Here is a 208-residue protein sequence, read N- to C-terminus: MRAVIPYKKAGAKSRLSPVLSLEEREEFVELMLNQVIDSLRGAGIEKIDILSPSVYGLEDMTKARVLLDEDDLNEALNRYLAGSEEPVLIVMADLPLLAPAHIKGISSTEKDVCIVPGKGGGTNALFIKNPSRYRVKYYGSSFLTHCSIATDTGQNFEIYDSFLAGTDIDEPEDLVELLIHGKGPAKEYISRKFRLEVSRGRVGLVLL.

It belongs to the CofC family. Homodimer.

The enzyme catalyses (2S)-2-phospholactate + GTP + H(+) = (2S)-lactyl-2-diphospho-5'-guanosine + diphosphate. Its pathway is cofactor biosynthesis; coenzyme F420 biosynthesis. Guanylyltransferase that catalyzes the activation of (2S)-2-phospholactate (2-PL) as (2S)-lactyl-2-diphospho-5'-guanosine, via the condensation of 2-PL with GTP. It is involved in the biosynthesis of coenzyme F420, a hydride carrier cofactor. This chain is 2-phospho-L-lactate guanylyltransferase, found in Methanosarcina acetivorans (strain ATCC 35395 / DSM 2834 / JCM 12185 / C2A).